The sequence spans 462 residues: Trigger factor (462 aa).

Residues 172-257 form the PPIase FKBP-type domain; it reads GDKATIDFVG…LKALAAPGET (86 aa). Residues 443–462 are disordered; the sequence is LLAADEEDEEEAAESSAALV. Acidic residues predominate over residues 444-455; the sequence is LAADEEDEEEAA.

This sequence belongs to the FKBP-type PPIase family. Tig subfamily.

The protein resides in the cytoplasm. It carries out the reaction [protein]-peptidylproline (omega=180) = [protein]-peptidylproline (omega=0). In terms of biological role, involved in protein export. Acts as a chaperone by maintaining the newly synthesized protein in an open conformation. Functions as a peptidyl-prolyl cis-trans isomerase. The sequence is that of Trigger factor from Methylocella silvestris (strain DSM 15510 / CIP 108128 / LMG 27833 / NCIMB 13906 / BL2).